The sequence spans 101 residues: NAD(P)H-quinone oxidoreductase subunit 4L, chloroplastic (101 aa).

3 consecutive transmembrane segments (helical) span residues 2–22 (MLEHVLVLSAYLFSIGIYGLI), 32–52 (MCLELILNAVNINLVTFSDLF), and 61–81 (IFSIFVIAIAAAEAAIGPAIV).

This sequence belongs to the complex I subunit 4L family. As to quaternary structure, NDH is composed of at least 16 different subunits, 5 of which are encoded in the nucleus.

Its subcellular location is the plastid. It is found in the chloroplast thylakoid membrane. It catalyses the reaction a plastoquinone + NADH + (n+1) H(+)(in) = a plastoquinol + NAD(+) + n H(+)(out). The catalysed reaction is a plastoquinone + NADPH + (n+1) H(+)(in) = a plastoquinol + NADP(+) + n H(+)(out). NDH shuttles electrons from NAD(P)H:plastoquinone, via FMN and iron-sulfur (Fe-S) centers, to quinones in the photosynthetic chain and possibly in a chloroplast respiratory chain. The immediate electron acceptor for the enzyme in this species is believed to be plastoquinone. Couples the redox reaction to proton translocation, and thus conserves the redox energy in a proton gradient. The sequence is that of NAD(P)H-quinone oxidoreductase subunit 4L, chloroplastic from Illicium oligandrum (Star anise).